A 274-amino-acid polypeptide reads, in one-letter code: 2,3,4,5-tetrahydropyridine-2,6-dicarboxylate N-succinyltransferase (274 aa).

Substrate is bound by residues arginine 104 and aspartate 141.

Belongs to the transferase hexapeptide repeat family. As to quaternary structure, homotrimer.

The protein localises to the cytoplasm. It catalyses the reaction (S)-2,3,4,5-tetrahydrodipicolinate + succinyl-CoA + H2O = (S)-2-succinylamino-6-oxoheptanedioate + CoA. It participates in amino-acid biosynthesis; L-lysine biosynthesis via DAP pathway; LL-2,6-diaminopimelate from (S)-tetrahydrodipicolinate (succinylase route): step 1/3. In Shewanella halifaxensis (strain HAW-EB4), this protein is 2,3,4,5-tetrahydropyridine-2,6-dicarboxylate N-succinyltransferase.